Consider the following 1178-residue polypeptide: Double-stranded RNA-specific adenosine deaminase (1178 aa).

Residues 1-40 form a disordered region; sequence MSQGFRGPTGVFPHQTQSYLDPSHEHSKWRYPQPQGPESY. An asymmetric dimethylarginine mark is found at Arg-30 and Arg-42. The 67-residue stretch at 135-201 folds into the Z-binding 1 domain; it reads LSISQSPEQK…GKPPLWSLVP (67 aa). Residues 135 to 204 are interaction with Z-DNA; it reads LSISQSPEQK…PLWSLVPLSQ (70 aa). The interval 221–244 is disordered; it reads EFPRGEPGLDSEDGDPASDLEGPS. The segment covering 229-238 has biased composition (acidic residues); it reads LDSEDGDPAS. A phosphoserine mark is found at Ser-231 and Ser-238. The Z-binding 2 domain maps to 246–310; sequence PLDMAEIKEK…ATPPIWYLTD (65 aa). The tract at residues 316–383 is disordered; that stretch reads LQMKRSTHSA…SRHEARPGPM (68 aa). Residues 323 to 337 are compositionally biased toward low complexity; it reads HSAPAPTPTAVPEAT. Residues 360–379 show a composition bias toward basic and acidic residues; it reads KRVENGQEPAIKHESRHEAR. A Glycyl lysine isopeptide (Lys-Gly) (interchain with G-Cter in SUMO); alternate cross-link involves residue Lys-371. Lys-371 is covalently cross-linked (Glycyl lysine isopeptide (Lys-Gly) (interchain with G-Cter in SUMO1); alternate). A Glycyl lysine isopeptide (Lys-Gly) (interchain with G-Cter in SUMO2); alternate cross-link involves residue Lys-371. Ser-434 is subject to Phosphoserine. Residues 456–524 form the DRBM 1 domain; it reads NPVSGLLEYA…AVKAMAILLR (69 aa). Positions 527-550 are enriched in basic and acidic residues; that stretch reads KAKDSGQPEDLSHCPMEEDSEKPA. The disordered stretch occupies residues 527-564; that stretch reads KAKDSGQPEDLSHCPMEEDSEKPAEAQAPSSSATSLFS. Residues 554-564 show a composition bias toward polar residues; it reads APSSSATSLFS. Phosphoserine occurs at positions 567, 582, and 589. The region spanning 567 to 635 is the DRBM 2 domain; it reads SPVTTLLECM…AEEAMKALQE (69 aa). The interval 631-657 is disordered; sequence KALQEEAASSADDQSGGANTDSLDESM. Over residues 635–648 the composition is skewed to low complexity; that stretch reads EEAASSADDQSGGA. The N-terminal extension of DRBM 3 and constituent of a bi-partite nuclear localization signal stretch occupies residues 665–674; it reads IGELVRYLNT. Residues 675–743 enclose the DRBM 3 domain; it reads NPVGGLLEYA…ADAALRVLIG (69 aa). The C-terminal extension of DRBM 3 and constituent of a bi-partite nuclear localization signal stretch occupies residues 744-750; that stretch reads ESEKAEQ. Thr-757 is subject to Phosphothreonine. 3 positions are modified to phosphoserine: Ser-763, Ser-772, and Ser-774. Lys-824 participates in a covalent cross-link: Glycyl lysine isopeptide (Lys-Gly) (interchain with G-Cter in SUMO2). In terms of domain architecture, A to I editase spans 835 to 1170; sequence SLGTGNRCVK…ISKPQEEKNF (336 aa). His-859 serves as a coordination point for Zn(2+). The Proton donor role is filled by Glu-861. Positions 915 and 985 each coordinate Zn(2+).

Homodimer. Homodimerization is essential for its catalytic activity. Isoform 5 can form heterodimers with ADARB1/ADAR2. Isoform 1 and isoform 5 (via DRBM 3 domain) interact with TNPO1. Isoform 5 (via DRBM domains) interacts with XPO5. Isoform 1 and isoform 5 can interact with UPF1. Isoform 1 interacts with ILF2/NF45 and ILF3/NF90. Binding to ILF3/NF90 up-regulates ILF3-mediated gene expression. Isoform 1 and isoform 5 interact with EIF2AK2/PKR. Post-translationally, sumoylation reduces RNA-editing activity. As to expression, highest levels in brain and spleen. Lowest levels in liver.

Its subcellular location is the cytoplasm. It localises to the nucleus. It is found in the nucleolus. It carries out the reaction adenosine in double-stranded RNA + H2O + H(+) = inosine in double-stranded RNA + NH4(+). Functionally, catalyzes the hydrolytic deamination of adenosine to inosine in double-stranded RNA (dsRNA) referred to as A-to-I RNA editing. This may affect gene expression and function in a number of ways that include mRNA translation by changing codons and hence the amino acid sequence of proteins since the translational machinery read the inosine as a guanosine; pre-mRNA splicing by altering splice site recognition sequences; RNA stability by changing sequences involved in nuclease recognition; genetic stability in the case of RNA virus genomes by changing sequences during viral RNA replication; and RNA structure-dependent activities such as microRNA production or targeting or protein-RNA interactions. Can edit both viral and cellular RNAs and can edit RNAs at multiple sites (hyper-editing) or at specific sites (site-specific editing). Its cellular RNA substrates include: bladder cancer-associated protein (BLCAP), neurotransmitter receptors for glutamate (GRIA2) and serotonin (HTR2C) and GABA receptor (GABRA3). Site-specific RNA editing of transcripts encoding these proteins results in amino acid substitutions which consequently alters their functional activities. Exhibits low-level editing at the GRIA2 Q/R site, but edits efficiently at the R/G site and HOTSPOT1. Does not affect polyomavirus replication but provides protection against virus-induced cytopathic effects. Essential for embryonic development and cell survival and plays a critical role in the maintenance of hematopoietic stem cells. This chain is Double-stranded RNA-specific adenosine deaminase (Adar), found in Mus musculus (Mouse).